The sequence spans 360 residues: Phenylalanine--tRNA ligase alpha subunit (360 aa).

A Mg(2+)-binding site is contributed by E260.

This sequence belongs to the class-II aminoacyl-tRNA synthetase family. Phe-tRNA synthetase alpha subunit type 1 subfamily. Tetramer of two alpha and two beta subunits. The cofactor is Mg(2+).

It localises to the cytoplasm. It carries out the reaction tRNA(Phe) + L-phenylalanine + ATP = L-phenylalanyl-tRNA(Phe) + AMP + diphosphate + H(+). This is Phenylalanine--tRNA ligase alpha subunit from Agrobacterium fabrum (strain C58 / ATCC 33970) (Agrobacterium tumefaciens (strain C58)).